The chain runs to 421 residues: Serine hydroxymethyltransferase (421 aa).

(6S)-5,6,7,8-tetrahydrofolate is bound by residues Leu-123 and 127 to 129; that span reads GHL. An N6-(pyridoxal phosphate)lysine modification is found at Lys-232.

This sequence belongs to the SHMT family. As to quaternary structure, homodimer. Pyridoxal 5'-phosphate serves as cofactor.

It is found in the cytoplasm. It catalyses the reaction (6R)-5,10-methylene-5,6,7,8-tetrahydrofolate + glycine + H2O = (6S)-5,6,7,8-tetrahydrofolate + L-serine. The protein operates within one-carbon metabolism; tetrahydrofolate interconversion. Its pathway is amino-acid biosynthesis; glycine biosynthesis; glycine from L-serine: step 1/1. Functionally, catalyzes the reversible interconversion of serine and glycine with tetrahydrofolate (THF) serving as the one-carbon carrier. This reaction serves as the major source of one-carbon groups required for the biosynthesis of purines, thymidylate, methionine, and other important biomolecules. Also exhibits THF-independent aldolase activity toward beta-hydroxyamino acids, producing glycine and aldehydes, via a retro-aldol mechanism. The chain is Serine hydroxymethyltransferase from Ehrlichia canis (strain Jake).